The primary structure comprises 493 residues: Voltage-gated potassium channel regulatory subunit KCNF1 (493 aa).

At 1-183 the chain is on the cytoplasmic side; it reads MDASAEQSLP…KPESSCPARV (183 aa). Residues 184–204 form a helical membrane-spanning segment; that stretch reads VAVLSFLLILVSSVVMCMGTI. Residues 224 to 244 traverse the membrane as a helical segment; the sequence is NVETACIGWFTLEYLLRLFSS. The Cytoplasmic segment spans residues 245–249; that stretch reads PNKLH. A helical transmembrane segment spans residues 250 to 270; it reads FALSFMNIVDVLAILPFYVSL. Residues 290 to 310 traverse the membrane as a helical; Voltage-sensor segment; sequence QALRIMRIARIFKLARHSSGL. The Cytoplasmic portion of the chain corresponds to 311–324; that stretch reads QTLTYALKRSFKEL. The chain crosses the membrane as a helical span at residues 325–345; that stretch reads GLLLMYLAVGIFVFSALGYTM. Positions 358–378 form an intramembrane region, pore-forming; that stretch reads PQSFWWAIITMTTVGYGDIYP. The Selectivity filter motif lies at 370–375; sequence TVGYGD. The chain crosses the membrane as a helical span at residues 386-406; sequence NAAISFLCGVIAIALPIHPII. The Cytoplasmic segment spans residues 407–493; that stretch reads NNFVRYYNKQ…HHRTRLQSCK (87 aa). Positions 434–468 are disordered; sequence SSSAEGKPGGSRSDLDTLPPEPAAREGPSWGSRLK.

Belongs to the potassium channel family. F (TC 1.A.1.2) subfamily. Kv5.1/KCNF1 sub-subfamily. Heterotetramer with KCNB1 or KCNB2.

The protein resides in the cell membrane. Functionally, regulatory alpha-subunit of the voltage-gated potassium (Kv) channel which, when coassembled with KCNB1 or KCNB2, can modulate their expression and their gating kinetics by acting on deactivation upon repolarization and inactivation during maintained depolarization. Accelerates inactivation but has relatively little effect on deactivation. Coexpression with KCNB1 or KCNB2 markedly slows inactivation. Each modulatory subunit has its own specific properties of regulation, and can lead to extensive inhibitions, to large changes in kinetics, and/or to large shifts in the voltage dependencies of the inactivation process. The gating kinetics depends on the nature and stoichiometry of the associated regulatory sunbunit. Fails to produce a potassium current when expressed alone. The polypeptide is Voltage-gated potassium channel regulatory subunit KCNF1 (Mus musculus (Mouse)).